Reading from the N-terminus, the 737-residue chain is Dipeptidyl peptidase 3 (737 aa).

A2 bears the N-acetylalanine mark. H450 lines the Zn(2+) pocket. E451 is an active-site residue. Residues H455 and E508 each coordinate Zn(2+).

Belongs to the peptidase M49 family. The cofactor is Zn(2+). As to expression, detected in placenta (at protein level). Detected in erythrocytes (at protein level).

The protein localises to the cytoplasm. The protein resides in the cytosol. It catalyses the reaction Release of an N-terminal dipeptide from a peptide comprising four or more residues, with broad specificity. Also acts on dipeptidyl 2-naphthylamides.. With respect to regulation, activated by Co(2+). Inhibited by EDTA and o-phenanthroline (in vitro). Functionally, cleaves and degrades bioactive peptides, including angiotensin, Leu-enkephalin and Met-enkephalin. Also cleaves Arg-Arg-beta-naphthylamide (in vitro). The sequence is that of Dipeptidyl peptidase 3 (DPP3) from Homo sapiens (Human).